The sequence spans 386 residues: GRIFNGSGKPIDNGPPILPEAYLDISGSSINPSERTYPEEMIQTGISTIDVMNSIARGQKIPFFSAAGLPHNEIAAQICRQAGLVKRLEKAGDLLEDGEEDNFAIVFAAMGVNMETAQFFKRDFEENGSMERVTLFLNLANDPTIERIITPRIALTTAEYLAYECGKHVLVILTDMSSYADALREVSAAREEVPGRRGYPGYMYTDLATIYERAGRIEGRKGSITQIPILTMPNDDITHPTPDLTGYITEGQIYIDRQLHNRQIYPPINVLPSLSRLMKSAIGEGMTRRDHADVSNQLYANYAIGKDVQAMKAVVGEEALSSEDLLYLEFLDKFERKFVTQGAYDTRNIFQSLDLAWTLLRIFPRELLHRIPAKTLDQYYSRDAAN.

The protein belongs to the ATPase alpha/beta chains family. As to quaternary structure, V-ATPase is a heteromultimeric enzyme composed of a peripheral catalytic V1 complex (main components: subunits A, B, C, D, E, and F) attached to an integral membrane V0 proton pore complex (main component: the proteolipid protein).

Functionally, non-catalytic subunit of the peripheral V1 complex of vacuolar ATPase. V-ATPase is responsible for acidifying a variety of intracellular compartments in eukaryotic cells. The chain is V-type proton ATPase subunit B 2 from Gossypium hirsutum (Upland cotton).